Reading from the N-terminus, the 302-residue chain is Ectoine dioxygenase (302 aa).

Gln-128 contacts L-ectoine. Position 134 (Lys-134) interacts with 2-oxoglutarate. Fe cation-binding residues include His-145, Asp-147, and His-246.

This sequence belongs to the PhyH family. EctD subfamily. In terms of assembly, homodimer. Requires Fe(2+) as cofactor.

It carries out the reaction L-ectoine + 2-oxoglutarate + O2 = 5-hydroxyectoine + succinate + CO2. In terms of biological role, involved in the biosynthesis of 5-hydroxyectoine, called compatible solute, which helps organisms to survive extreme osmotic stress by acting as a highly soluble organic osmolyte. Catalyzes the 2-oxoglutarate-dependent selective hydroxylation of L-ectoine to yield (4S,5S)-5-hydroxyectoine. This Stutzerimonas stutzeri (strain A1501) (Pseudomonas stutzeri) protein is Ectoine dioxygenase.